The chain runs to 333 residues: D-glutamate N-acetyltransferase (333 aa).

Belongs to the N-acetyltransferase DgcN family.

The enzyme catalyses D-glutamate + acetyl-CoA = N-acetyl-D-glutamate + CoA + H(+). It functions in the pathway amino-acid degradation. N-acetyltransferase involved in a deamination-independent D-glutamate degradation pathway, named the DgcN-DgcA pathway. Catalyzes the transfer of the acetyl moiety from acetyl-CoA to D-glutamate to generate N-acetyl-D-glutamate. The sequence is that of D-glutamate N-acetyltransferase from Tritonibacter scottomollicae (Epibacterium scottomollicae).